Consider the following 572-residue polypeptide: Dihydroxy-acid dehydratase (572 aa).

Asp-78 provides a ligand contact to Mg(2+). Cys-119 provides a ligand contact to [2Fe-2S] cluster. Residues Asp-120 and Lys-121 each contribute to the Mg(2+) site. Lys-121 bears the N6-carboxylysine mark. Cys-192 provides a ligand contact to [2Fe-2S] cluster. Residue Glu-459 coordinates Mg(2+). Ser-485 (proton acceptor) is an active-site residue.

The protein belongs to the IlvD/Edd family. As to quaternary structure, homodimer. The cofactor is [2Fe-2S] cluster. It depends on Mg(2+) as a cofactor.

It catalyses the reaction (2R)-2,3-dihydroxy-3-methylbutanoate = 3-methyl-2-oxobutanoate + H2O. The catalysed reaction is (2R,3R)-2,3-dihydroxy-3-methylpentanoate = (S)-3-methyl-2-oxopentanoate + H2O. Its pathway is amino-acid biosynthesis; L-isoleucine biosynthesis; L-isoleucine from 2-oxobutanoate: step 3/4. It participates in amino-acid biosynthesis; L-valine biosynthesis; L-valine from pyruvate: step 3/4. In terms of biological role, functions in the biosynthesis of branched-chain amino acids. Catalyzes the dehydration of (2R,3R)-2,3-dihydroxy-3-methylpentanoate (2,3-dihydroxy-3-methylvalerate) into 2-oxo-3-methylpentanoate (2-oxo-3-methylvalerate) and of (2R)-2,3-dihydroxy-3-methylbutanoate (2,3-dihydroxyisovalerate) into 2-oxo-3-methylbutanoate (2-oxoisovalerate), the penultimate precursor to L-isoleucine and L-valine, respectively. In Helicobacter hepaticus (strain ATCC 51449 / 3B1), this protein is Dihydroxy-acid dehydratase.